We begin with the raw amino-acid sequence, 210 residues long: Urease accessory protein UreF (210 aa).

The protein belongs to the UreF family. As to quaternary structure, ureD, UreF and UreG form a complex that acts as a GTP-hydrolysis-dependent molecular chaperone, activating the urease apoprotein by helping to assemble the nickel containing metallocenter of UreC. The UreE protein probably delivers the nickel.

It is found in the cytoplasm. Required for maturation of urease via the functional incorporation of the urease nickel metallocenter. In Cereibacter sphaeroides (strain KD131 / KCTC 12085) (Rhodobacter sphaeroides), this protein is Urease accessory protein UreF.